The primary structure comprises 279 residues: Diaminopimelate epimerase 1 (279 aa).

Residues Asn-13 and Asn-66 each contribute to the substrate site. The active-site Proton donor is Cys-75. Substrate-binding positions include Gly-76 to Asn-77, Asn-164, Asn-197, and Glu-215 to Arg-216. The active-site Proton acceptor is Cys-224. Gly-225 to Thr-226 provides a ligand contact to substrate.

Belongs to the diaminopimelate epimerase family. Homodimer.

It is found in the cytoplasm. The enzyme catalyses (2S,6S)-2,6-diaminopimelate = meso-2,6-diaminopimelate. It participates in amino-acid biosynthesis; L-lysine biosynthesis via DAP pathway; DL-2,6-diaminopimelate from LL-2,6-diaminopimelate: step 1/1. In terms of biological role, catalyzes the stereoinversion of LL-2,6-diaminopimelate (L,L-DAP) to meso-diaminopimelate (meso-DAP), a precursor of L-lysine and an essential component of the bacterial peptidoglycan. This Nostoc sp. (strain PCC 7120 / SAG 25.82 / UTEX 2576) protein is Diaminopimelate epimerase 1.